The sequence spans 386 residues: Lipoyl synthase, mitochondrial (386 aa).

The segment at 1–48 is disordered; it reads MHGRRHLAASLTRALTQAPSRSISSTPSLLQTLDPSVPSPSPPPAAEP. Polar residues predominate over residues 13 to 34; that stretch reads RALTQAPSRSISSTPSLLQTLD. A compositionally biased stretch (pro residues) spans 37-46; it reads VPSPSPPPAA. [4Fe-4S] cluster is bound by residues cysteine 113, cysteine 118, cysteine 124, cysteine 144, cysteine 148, cysteine 151, and serine 360. One can recognise a Radical SAM core domain in the interval 129 to 349; the sequence is ETGTATATIM…RALGVEMGFR (221 aa).

The protein belongs to the radical SAM superfamily. Lipoyl synthase family. It depends on [4Fe-4S] cluster as a cofactor.

It localises to the mitochondrion. It carries out the reaction [[Fe-S] cluster scaffold protein carrying a second [4Fe-4S](2+) cluster] + N(6)-octanoyl-L-lysyl-[protein] + 2 oxidized [2Fe-2S]-[ferredoxin] + 2 S-adenosyl-L-methionine + 4 H(+) = [[Fe-S] cluster scaffold protein] + N(6)-[(R)-dihydrolipoyl]-L-lysyl-[protein] + 4 Fe(3+) + 2 hydrogen sulfide + 2 5'-deoxyadenosine + 2 L-methionine + 2 reduced [2Fe-2S]-[ferredoxin]. Its pathway is protein modification; protein lipoylation via endogenous pathway; protein N(6)-(lipoyl)lysine from octanoyl-[acyl-carrier-protein]: step 2/2. In terms of biological role, catalyzes the radical-mediated insertion of two sulfur atoms into the C-6 and C-8 positions of the octanoyl moiety bound to the lipoyl domains of lipoate-dependent enzymes, thereby converting the octanoylated domains into lipoylated derivatives. The chain is Lipoyl synthase, mitochondrial from Sorghum bicolor (Sorghum).